Here is a 373-residue protein sequence, read N- to C-terminus: Gibberellin 3-beta-dioxygenase 2 (373 aa).

The Fe2OG dioxygenase domain occupies 203 to 304 (MTATVHLNWY…RVSLGYFLGP (102 aa)). Tyr-212 is a binding site for 2-oxoglutarate. Fe cation-binding residues include His-227, Asp-229, and His-285. 2-oxoglutarate-binding residues include Arg-295 and Ser-297.

The protein belongs to the iron/ascorbate-dependent oxidoreductase family. L-ascorbate is required as a cofactor. It depends on Fe(2+) as a cofactor. In terms of tissue distribution, highly expressed in elongating leaves. Expressed in unopened flowers. Expressed at low levels in leaf blades, shoots, rachis, stems and young panicles.

It carries out the reaction gibberellin A20 + 2-oxoglutarate + O2 = gibberellin A1 + succinate + CO2. It participates in plant hormone biosynthesis; gibberellin biosynthesis. In terms of biological role, catalyzes the 3-beta-hydroxylation of the inactive gibberellin precursors, leading to the formation of bioactive gibberellins. In vitro, converts the precursors GA20, GA5, GA44 and GA9 to the corresponding 3-beta-hydroxylated active products GA1, GA3, GA38 and GA4, respectively. Involved in the production of bioactive GA for vegetative growth and development. Controls the elongation of the vegetative shoot and plant height by the regulation of active gibberellin levels. This Oryza sativa subsp. japonica (Rice) protein is Gibberellin 3-beta-dioxygenase 2.